The primary structure comprises 192 residues: Xanthine phosphoribosyltransferase (192 aa).

Residues leucine 20 and asparagine 27 each contribute to the xanthine site. 128 to 132 (AQGEA) is a binding site for 5-phospho-alpha-D-ribose 1-diphosphate. Lysine 156 provides a ligand contact to xanthine.

The protein belongs to the purine/pyrimidine phosphoribosyltransferase family. Xpt subfamily. Homodimer.

It localises to the cytoplasm. The enzyme catalyses XMP + diphosphate = xanthine + 5-phospho-alpha-D-ribose 1-diphosphate. It functions in the pathway purine metabolism; XMP biosynthesis via salvage pathway; XMP from xanthine: step 1/1. Its function is as follows. Converts the preformed base xanthine, a product of nucleic acid breakdown, to xanthosine 5'-monophosphate (XMP), so it can be reused for RNA or DNA synthesis. The chain is Xanthine phosphoribosyltransferase from Lactobacillus helveticus (strain DPC 4571).